The primary structure comprises 208 residues: NAD(P)H-hydrate epimerase (208 aa).

Positions 10-208 constitute a YjeF N-terminal domain; that stretch reads IRDAERQTLA…TLGVIMTPAN (199 aa). 54–58 lines the (6S)-NADPHX pocket; the sequence is NNGGD. K(+) contacts are provided by asparagine 55 and aspartate 117. (6S)-NADPHX is bound by residues 121–127 and aspartate 150; that span reads GIGLNRP. K(+) is bound at residue serine 153.

It belongs to the NnrE/AIBP family. Requires K(+) as cofactor.

The catalysed reaction is (6R)-NADHX = (6S)-NADHX. It carries out the reaction (6R)-NADPHX = (6S)-NADPHX. In terms of biological role, catalyzes the epimerization of the S- and R-forms of NAD(P)HX, a damaged form of NAD(P)H that is a result of enzymatic or heat-dependent hydration. This is a prerequisite for the S-specific NAD(P)H-hydrate dehydratase to allow the repair of both epimers of NAD(P)HX. This is NAD(P)H-hydrate epimerase from Achromobacter xylosoxidans (strain A8).